Consider the following 1513-residue polypeptide: DNA-directed RNA polymerase subunit beta'' (1513 aa).

Zn(2+) is bound by residues cysteine 220, cysteine 296, cysteine 303, and cysteine 306. Residues 644-769 (RTREKDSENE…EYGNPEEDSV (126 aa)) are disordered. A compositionally biased stretch (basic and acidic residues) spans 659 to 679 (NEYRTREEECKTLEDEYRTRE). Residues 680 to 707 (EEYETLEDEYGIPENEYETLEDEYGILE) show a composition bias toward acidic residues. Basic and acidic residues predominate over residues 726–737 (NKYRPREDKYGT). Over residues 738–767 (LEEDSEDEHGTLEEDSEEDSEDEYGNPEED) the composition is skewed to acidic residues.

This sequence belongs to the RNA polymerase beta' chain family. RpoC2 subfamily. In terms of assembly, in plastids the minimal PEP RNA polymerase catalytic core is composed of four subunits: alpha, beta, beta', and beta''. When a (nuclear-encoded) sigma factor is associated with the core the holoenzyme is formed, which can initiate transcription. Zn(2+) is required as a cofactor.

It localises to the plastid. The protein localises to the chloroplast. The enzyme catalyses RNA(n) + a ribonucleoside 5'-triphosphate = RNA(n+1) + diphosphate. In terms of biological role, DNA-dependent RNA polymerase catalyzes the transcription of DNA into RNA using the four ribonucleoside triphosphates as substrates. The sequence is that of DNA-directed RNA polymerase subunit beta'' from Oryza sativa (Rice).